The primary structure comprises 553 residues: RNA exonuclease 1 (553 aa).

The residue at position 24 (Ser-24) is a Phosphoserine. A coiled-coil region spans residues 167-194; sequence MEKINKLKELQKKKKITINDLVLSEQQL. An Exonuclease domain is found at 225 to 373; the sequence is IFALDCEMCL…EDARACLELT (149 aa). A coiled-coil region spans residues 509–533; the sequence is WNNLSTELEFIQDKKERLDKRRERE.

The protein belongs to the REXO1/REXO3 family.

It is found in the nucleus. Functionally, 3' exoribonuclease required for 5S rRNA maturation and for the proper maturation of the 5' cistron of the tRNA-Arg3 dicistronic gene. Involved with REX2 in the maturation of the 5.8S rRNA, and with REX2 and REX3, in the 3' processing of the U5L snRNA. This chain is RNA exonuclease 1 (RNH70), found in Saccharomyces cerevisiae (strain ATCC 204508 / S288c) (Baker's yeast).